Here is a 365-residue protein sequence, read N- to C-terminus: Selina-4(15),7(11)-diene synthase ((2E,6E)-farnesyl diphosphate cyclizing) (365 aa).

D82 and E87 together coordinate Mg(2+). The DDXXXE motif signature appears at 82–87 (DDGHCE). Position 178 (R178) interacts with substrate. Residues N224 and S228 each contribute to the Mg(2+) site. K231 lines the substrate pocket. Mg(2+) is bound at residue E232. 310–311 (RY) contacts substrate.

It belongs to the terpene synthase family. Monomer. Mg(2+) serves as cofactor.

It catalyses the reaction (2E,6E)-farnesyl diphosphate = selina-4(15),7(11)-diene + diphosphate. The protein operates within secondary metabolite biosynthesis; terpenoid biosynthesis. In terms of biological role, catalyzes the conversion of (2E,6E)-farnesyl diphosphate (FPP) to yield the bicyclic sesquiterpene selina-4(15),7(11)-diene via a 1,10-cyclization, which requires the abstraction of the pyrophosphate from FPP leading to a (E,E)-germacradienyl cation. The only accepted substrate is (2E,6E)-farnesyl diphosphate (FPP). The chain is Selina-4(15),7(11)-diene synthase ((2E,6E)-farnesyl diphosphate cyclizing) from Streptomyces pristinaespiralis (strain ATCC 25486 / DSM 40338 / CBS 914.69 / JCM 4507 / KCC S-0507 / NBRC 13074 / NRRL 2958 / 5647).